Here is a 290-residue protein sequence, read N- to C-terminus: Arylamine N-acetyltransferase 1 (290 aa).

Met-1 is modified (N-acetylmethionine). Cys-68 (acyl-thioester intermediate) is an active-site residue. Ser-103 is a CoA binding site. 106–107 contributes to the substrate binding site; sequence VH. Catalysis depends on residues His-107 and Asp-122. Position 208 (Tyr-208) interacts with CoA.

This sequence belongs to the arylamine N-acetyltransferase family.

Its subcellular location is the cytoplasm. The catalysed reaction is an arylamine + acetyl-CoA = an N-acetylarylamine + CoA. In terms of biological role, participates in the detoxification of a plethora of hydrazine and arylamine drugs. Acetylates both arylamines and arylalkylamines. This chain is Arylamine N-acetyltransferase 1 (Nat1), found in Rattus norvegicus (Rat).